A 302-amino-acid polypeptide reads, in one-letter code: MGDIRKIVFEENKLEKKLCRLVGQAICDFGMIEDGDKVMVCVSGGKDSYAMLDLLMKLRERAPINFEIVAVNLDQKQPNFPTNILPNYLKSLDIQYHIEEQDTYSIVKRVIPDGKTTCGLCSRLRRGILYRVADELGATKIALGHHRDDILETLMLNMFYAGKLKGMPPKLRSDDGKHIVIRPLAYVPEKLLERYSADMNFPIIPCDLCGSQPNLQRQVMKEMLRDWEKKHPGRVENLFRSMHHIVPSHLMDGEAFDFKNLEISSELSGIAARSSGDRAIDEADLDELACGTLIQGTYNPPL.

A PP-loop motif motif is present at residues 43-48 (SGGKDS). [4Fe-4S] cluster contacts are provided by Cys-118, Cys-121, and Cys-209.

Belongs to the TtcA family. Homodimer. It depends on Mg(2+) as a cofactor. The cofactor is [4Fe-4S] cluster.

Its subcellular location is the cytoplasm. The catalysed reaction is cytidine(32) in tRNA + S-sulfanyl-L-cysteinyl-[cysteine desulfurase] + AH2 + ATP = 2-thiocytidine(32) in tRNA + L-cysteinyl-[cysteine desulfurase] + A + AMP + diphosphate + H(+). It functions in the pathway tRNA modification. In terms of biological role, catalyzes the ATP-dependent 2-thiolation of cytidine in position 32 of tRNA, to form 2-thiocytidine (s(2)C32). The sulfur atoms are provided by the cysteine/cysteine desulfurase (IscS) system. The protein is tRNA-cytidine(32) 2-sulfurtransferase of Polynucleobacter necessarius subsp. necessarius (strain STIR1).